A 261-amino-acid chain; its full sequence is uncharacterized protein (261 aa).

5 helical membrane-spanning segments follow: residues 38–58 (FIYLILGGFGFYQPSNLITLL), 134–154 (YTLMVSLVAIFQCLISLLALI), 163–183 (ILINLSLTLNFFLLLFNTYVL), 195–215 (YMGLIVSYIISLLDFSALFFL), and 219–239 (HKSVLSVISSIFSFFLMCLKV).

It localises to the membrane. This is an uncharacterized protein from Dictyostelium discoideum (Social amoeba).